The primary structure comprises 230 residues: Ureidoacrylate amidohydrolase RutB (230 aa).

The active-site Proton acceptor is Asp24. Lys133 is an active-site residue. Catalysis depends on Cys166, which acts as the Nucleophile.

This sequence belongs to the isochorismatase family. RutB subfamily.

It carries out the reaction (Z)-3-ureidoacrylate + H2O + H(+) = (Z)-3-aminoacrylate + NH4(+) + CO2. The enzyme catalyses (Z)-3-ureidoacrylate + H2O = (Z)-3-aminoacrylate + carbamate + H(+). It catalyses the reaction (Z)-2-methylureidoacrylate + H2O + H(+) = (Z)-2-methylaminoacrylate + NH4(+) + CO2. In terms of biological role, hydrolyzes ureidoacrylate to form aminoacrylate and carbamate. The carbamate hydrolyzes spontaneously, thereby releasing one of the nitrogen atoms of the pyrimidine ring as ammonia and one of its carbon atoms as CO2. In Escherichia coli O6:K15:H31 (strain 536 / UPEC), this protein is Ureidoacrylate amidohydrolase RutB.